We begin with the raw amino-acid sequence, 196 residues long: Potassium-transporting ATPase KdpC subunit (196 aa).

A helical membrane pass occupies residues 7–27 (PALVLFFVLTLLTGVAYPLAV).

The protein belongs to the KdpC family. The system is composed of three essential subunits: KdpA, KdpB and KdpC.

It is found in the cell inner membrane. Its function is as follows. Part of the high-affinity ATP-driven potassium transport (or Kdp) system, which catalyzes the hydrolysis of ATP coupled with the electrogenic transport of potassium into the cytoplasm. This subunit acts as a catalytic chaperone that increases the ATP-binding affinity of the ATP-hydrolyzing subunit KdpB by the formation of a transient KdpB/KdpC/ATP ternary complex. This is Potassium-transporting ATPase KdpC subunit from Polaromonas naphthalenivorans (strain CJ2).